The following is a 366-amino-acid chain: Dual-specificity RNA methyltransferase RlmN (366 aa).

The Proton acceptor role is filled by E102. Residues 108 to 340 (DEGRNTLCVS…TTTRKTRGRD (233 aa)) enclose the Radical SAM core domain. C115 and C345 form a disulfide bridge. Residues C122, C126, and C129 each coordinate [4Fe-4S] cluster. S-adenosyl-L-methionine is bound by residues 171–172 (GE), S203, 225–227 (SLH), and N302. The active-site S-methylcysteine intermediate is C345.

It belongs to the radical SAM superfamily. RlmN family. Requires [4Fe-4S] cluster as cofactor.

It is found in the cytoplasm. It catalyses the reaction adenosine(2503) in 23S rRNA + 2 reduced [2Fe-2S]-[ferredoxin] + 2 S-adenosyl-L-methionine = 2-methyladenosine(2503) in 23S rRNA + 5'-deoxyadenosine + L-methionine + 2 oxidized [2Fe-2S]-[ferredoxin] + S-adenosyl-L-homocysteine. It carries out the reaction adenosine(37) in tRNA + 2 reduced [2Fe-2S]-[ferredoxin] + 2 S-adenosyl-L-methionine = 2-methyladenosine(37) in tRNA + 5'-deoxyadenosine + L-methionine + 2 oxidized [2Fe-2S]-[ferredoxin] + S-adenosyl-L-homocysteine. Functionally, specifically methylates position 2 of adenine 2503 in 23S rRNA and position 2 of adenine 37 in tRNAs. m2A2503 modification seems to play a crucial role in the proofreading step occurring at the peptidyl transferase center and thus would serve to optimize ribosomal fidelity. In Methylococcus capsulatus (strain ATCC 33009 / NCIMB 11132 / Bath), this protein is Dual-specificity RNA methyltransferase RlmN.